A 537-amino-acid polypeptide reads, in one-letter code: uncharacterized protein (537 aa).

6 consecutive transmembrane segments (helical) span residues 5–25 (IGLGLIHGLMYGIVPVAPWFV), 40–60 (LAVAGTIAGQVTLLALTFFGW), 63–83 (VLWVWYYFEPALIILGTMAVV), 115–135 (GLYYFLMSFGLMFCNPLHLEG), 149–169 (VYLLAFTVSYTAIIFIFWVTL), and 197–217 (VGIVAALFLQFANCTPEALVI).

The protein resides in the plastid. Its subcellular location is the chloroplast membrane. This is an uncharacterized protein from Ostreococcus tauri.